The following is a 1372-amino-acid chain: uncharacterized protein (1372 aa).

The disordered stretch occupies residues 1 to 67 (MEATDQEVML…PPAPSKNPMQ (67 aa)). The span at 17–28 (MSTSATSSTNGG) shows a compositional bias: polar residues. Residues 75–143 (NLYQTAQEQL…LEEHDRLRRK (69 aa)) adopt a coiled-coil conformation. Disordered stretches follow at residues 178 to 199 (NDLSDLGIGTSSASGKSSLSGD), 238 to 287 (HINR…QASS), 380 to 414 (EVSNGGAPAAPKLVFRDGLTNGNSATTAPKSEVRR), 427 to 447 (QSLEQQRKAFSSSKSVDVPVP), and 486 to 531 (EERM…DSGI). 2 stretches are compositionally biased toward low complexity: residues 184–198 (GIGTSSASGKSSLSG) and 238–251 (HINRNGSNGNHGNG). Composition is skewed to polar residues over residues 257–287 (TGPSNSSKSAGRQYISSPGYDTSSSNAQASS) and 399–408 (TNGNSATTAP). Residues 409–438 (KSEVRRLSGDISSIRDRMQSLEQQRKAFSS) are a coiled coil. The segment covering 486 to 499 (EERMRQQQQKEKHS) has biased composition (basic and acidic residues). The span at 514 to 523 (ALIIEEPPVA) shows a compositional bias: low complexity. Residues 539–580 (LQQQQQLNAAIAALALEERQLEEAANAVNQIEAEFDELTDLH) adopt a coiled-coil conformation. Over residues 652-673 (VSKSGPTPNPTSTPNMVSSSPN) the composition is skewed to low complexity. Disordered regions lie at residues 652 to 679 (VSKSGPTPNPTSTPNMVSSSPNCNLRRK), 799 to 820 (SRQLDKPPTPPAPPKKTVRSEH), 860 to 897 (SQSDSKSLTSPIMSPKPLPSGRIPQITPPASPKPPKRV), 1151 to 1181 (SSQMMKTSLPESVEKPSTPLPGRKSKIPIPK), and 1231 to 1250 (SPPSIPKTPEQTQLHASPTK). Polar residues-rich tracts occupy residues 860–871 (SQSDSKSLTSPI) and 1151–1160 (SSQMMKTSLP).

This is an uncharacterized protein from Drosophila melanogaster (Fruit fly).